We begin with the raw amino-acid sequence, 96 residues long: UPF0235 protein YE3436 (96 aa).

Belongs to the UPF0235 family.

The protein is UPF0235 protein YE3436 of Yersinia enterocolitica serotype O:8 / biotype 1B (strain NCTC 13174 / 8081).